The following is a 464-amino-acid chain: Argininosuccinate lyase (464 aa).

This sequence belongs to the lyase 1 family. Argininosuccinate lyase subfamily.

The protein resides in the cytoplasm. The enzyme catalyses 2-(N(omega)-L-arginino)succinate = fumarate + L-arginine. It functions in the pathway amino-acid biosynthesis; L-arginine biosynthesis; L-arginine from L-ornithine and carbamoyl phosphate: step 3/3. This Pseudomonas fluorescens (strain ATCC BAA-477 / NRRL B-23932 / Pf-5) protein is Argininosuccinate lyase.